Reading from the N-terminus, the 540-residue chain is tRNA-2-methylthio-N(6)-dimethylallyladenosine synthase (540 aa).

One can recognise an MTTase N-terminal domain in the interval 41 to 157; the sequence is RTYEVRTFGC…LPTLLERSAH (117 aa). C50, C86, C120, C194, C198, and C201 together coordinate [4Fe-4S] cluster. Residues 180–416 form the Radical SAM core domain; it reads RESAYSGWVS…IALQERIQAE (237 aa). The region spanning 419-486 is the TRAM domain; it reads KELVGTTQEL…PFFLIADGPL (68 aa).

This sequence belongs to the methylthiotransferase family. MiaB subfamily. As to quaternary structure, monomer. It depends on [4Fe-4S] cluster as a cofactor.

It localises to the cytoplasm. It carries out the reaction N(6)-dimethylallyladenosine(37) in tRNA + (sulfur carrier)-SH + AH2 + 2 S-adenosyl-L-methionine = 2-methylsulfanyl-N(6)-dimethylallyladenosine(37) in tRNA + (sulfur carrier)-H + 5'-deoxyadenosine + L-methionine + A + S-adenosyl-L-homocysteine + 2 H(+). Catalyzes the methylthiolation of N6-(dimethylallyl)adenosine (i(6)A), leading to the formation of 2-methylthio-N6-(dimethylallyl)adenosine (ms(2)i(6)A) at position 37 in tRNAs that read codons beginning with uridine. In Corynebacterium urealyticum (strain ATCC 43042 / DSM 7109), this protein is tRNA-2-methylthio-N(6)-dimethylallyladenosine synthase.